Reading from the N-terminus, the 41-residue chain is U-megalopygitoxin(11)-Mo28 (41 aa).

Residues 1 to 29 (MRTTLLLLIIAITVMVFVSEAYAAPAPEP) form the signal peptide.

This sequence belongs to the caterpillar 11 family. In terms of tissue distribution, expressed by the venom apparatus.

Its subcellular location is the secreted. Functionally, probable toxin. The protein is U-megalopygitoxin(11)-Mo28 of Megalopyge opercularis (Southern flannel moth).